Consider the following 1444-residue polypeptide: MTAKEEEKQERFQLLMTQIGLQDVTTYEEFTKDAKIEKLVADKKNKTWQFHLHVPQIFPAALFHMMDVGMKRAFSQIAETEMQIVPENQTINETLIQDYWNLIVEPIGKQSPMIGKLLMEQKPTFKEPHFIEVAVHNDMEEATIQQRFQTKIIESYGKAGFPRLAMKMHMLDQSETDEYKAFAQAKQEEDQKKAAEAVQVMQKRQAEGQSGGGGAAPLTGPFQIGYKIKDDEEVKRLGDIYDEERRITVQGLIFATEIRELRSGRSLLQFKITDYTSSMIIKMFSRDNEDAAMFQNLKKGMWVKVRGSVQNDTFVRDLIMMAQDVNEIAGVKRLDTAEEKRAELHLHSPMSQMDATSSVDSLFKQAADWGHKAIAITDHSVAQSFPEAYGAGQKYGLKVIFGIEANLIDDGVPIAYNDQHIALEDATYCVFDVETTGLSAVYDTIIELAGVKMKNGEIIDKFEAFIDPGHPLSATTINLTGITDDMVKGSDPIDVVLKRFKEWSGDDILVAHNASFDMGFINTAYEKVGLEKAENAVVDTLELARFLYPHFKNHRLNTLTKKFNIILEQHHRAVFDAEATAYLAWKLIKDAKEMHNIDFHDSLNDYMGEGDAYKRARPFHATIYAQTAVGLKNLFKLITMSNINYFYRVPRIPRSQLKKLREGLIIGTACSQGELFEAMMQKGMQAAEKVAEFYDFIEVQPKPVYAPLIERELVRDEKALEEILKNIVRVGEKTGKPVVATGNVHYKDPVDKIYRKILIHSQGGANPLNRAELPDVHFRTTDEMLKEFAFLGEEKAKEIVVTNANLVVDWMENLKPIKDELYTPKIDGAEDEVRNMSYAMAHQLYGEKLPEIVEARLEKELKSIIGHGFAVIYLISHKLVKKSLVDGYLVGSRGSVGSSFVATMTEITEVNPLPPHYLCPNCKDSEFFDDGSVGSGFDLPDKDCPHCGTAYQKEGQDIPFETFLGFKGDKVPDIDLNFSGDYQPVAHAYTKEIFGEDYVFRAGTIGTVAEKTAFGYVRNYERDMNMTIRGAEIDRLVAGCTGVKRTTGQHPGGIIVIPDYMDVYDFTPVQFPADATDSEWKTTHFDFHSIHDNVLKLDILGHDDPTAIRMLQDLSGIDPKTIPTDDPDVMKLFGSTESLGVKPADIDSKTGTLGIPEFGTRFVRQMLEQTKPTTFSELVQISGLSHGTDVWLGNAEELIKNKTCELPDVIGCRDDIMVFLIYQGLESSLAFKIMESVRKGKGLTDEMEEAMMANKVPLWYIESCKKIKYMFPKAHAAAYVLMAVRIAYFKVHYPLYFYATYFTVRADDFDLTSMVNGKEAVKATMKEVNDKGMEASTKEKNLLTVLEIANEMLARGFHFQKVDLYKSSADEFIIDGESLIPPFNAIPSLGTNVAKQIVAARENGEFLSKEDLQQRGKVSKTIIQYMDDQGCLEGLPDQNQLSLF.

Residues 428-584 (YCVFDVETTG…FDAEATAYLA (157 aa)) form the Exonuclease domain.

This sequence belongs to the DNA polymerase type-C family. PolC subfamily.

Its subcellular location is the cytoplasm. It catalyses the reaction DNA(n) + a 2'-deoxyribonucleoside 5'-triphosphate = DNA(n+1) + diphosphate. Its function is as follows. Required for replicative DNA synthesis. This DNA polymerase also exhibits 3' to 5' exonuclease activity. The sequence is that of DNA polymerase III PolC-type from Listeria monocytogenes serovar 1/2a (strain ATCC BAA-679 / EGD-e).